The sequence spans 314 residues: Thymidylate synthase (314 aa).

Residues R21 and 176–177 each bind dUMP; that span reads RR. Catalysis depends on C196, which acts as the Nucleophile. DUMP contacts are provided by residues 216-219, N227, and 257-259; these read RSAD and HLY. D219 is a (6R)-5,10-methylene-5,6,7,8-tetrahydrofolate binding site. Position 313 (S313) interacts with (6R)-5,10-methylene-5,6,7,8-tetrahydrofolate.

It belongs to the thymidylate synthase family. Bacterial-type ThyA subfamily. Homodimer.

The protein resides in the cytoplasm. It catalyses the reaction dUMP + (6R)-5,10-methylene-5,6,7,8-tetrahydrofolate = 7,8-dihydrofolate + dTMP. It functions in the pathway pyrimidine metabolism; dTTP biosynthesis. Its function is as follows. Catalyzes the reductive methylation of 2'-deoxyuridine-5'-monophosphate (dUMP) to 2'-deoxythymidine-5'-monophosphate (dTMP) while utilizing 5,10-methylenetetrahydrofolate (mTHF) as the methyl donor and reductant in the reaction, yielding dihydrofolate (DHF) as a by-product. This enzymatic reaction provides an intracellular de novo source of dTMP, an essential precursor for DNA biosynthesis. In Listeria monocytogenes serotype 4b (strain CLIP80459), this protein is Thymidylate synthase.